A 123-amino-acid chain; its full sequence is Con-ikot-ikot (123 aa).

Positions methionine 1–alanine 18 are cleaved as a signal peptide. Positions alanine 19 to arginine 37 are excised as a propeptide. 5 disulfides stabilise this stretch: cysteine 49–cysteine 80, cysteine 50–cysteine 89, cysteine 57–cysteine 72, cysteine 90–cysteine 118, and cysteine 96–cysteine 113.

Homodimer; disulfide-linked. In terms of tissue distribution, expressed by the venom duct.

The protein localises to the secreted. Its function is as follows. Potently and selectively blocks the desensitization of ionotropic glutamate AMPA receptors (GRIA1, GRIA2, GRIA3 and GRIA4). Binds to a different site than does the drug cyclothiazide. The toxin acts like a straitjacket on the 'gating ring' of the ligand-binding domain (LBD) of the receptor. It does so by restraining the domains via both intra- and interdimer cross-links such that agonist-induced closure of the LBD 'clamshells' is transduced into an irislike expansion of the gating ring. Compared to other desensitization blockers, it is a poor stabilizer of the open channel because toxin-bound AMPA receptors undergo frequent brief closures. In vitro, application of the toxin to hippocampal slices causes a large and rapid increase in resting AMPA receptor-mediated current leading to neuronal death. This chain is Con-ikot-ikot, found in Conus striatus (Striated cone).